A 454-amino-acid chain; its full sequence is Mogroside I-E synthase (454 aa).

The Proton acceptor role is filled by His-18. His-18 provides a ligand contact to an anthocyanidin. The active-site Charge relay is the Asp-111. His-144 provides a ligand contact to an anthocyanidin. Residues Cys-259 and Cys-331 are joined by a disulfide bond. UDP-alpha-D-glucose-binding residues include Ser-278, Cys-331, Gln-333, Trp-351, Asn-352, Ser-353, and Glu-356. Ala-371 contributes to the an anthocyanidin binding site. 2 residues coordinate UDP-alpha-D-glucose: Asp-372 and Gln-373.

It belongs to the UDP-glycosyltransferase family. Highly expressed in young fruits 15 days after anthesis (15-DAA).

It catalyses the reaction mogrol + UDP-alpha-D-glucose = mogroside IE + UDP + H(+). The protein operates within secondary metabolite biosynthesis; terpenoid biosynthesis. Activity is increased by Mg(2+). Functionally, UDP-glycosyltransferase involved in the biosynthesis of cucurbitacin and mogroside tetracyclic triterpene natural products (e.g. siamenoside I and mogrosides IV, V and VI). Cucurbitacins have cytotoxic properties and exhibit deterrent taste as a defense barrier against herbivores. Mogrosides are nonsugar highly oxygenated compounds used as high-intensity zero-calorie sweeteners; they also possess pharmacological properties such as regulating immunity, lowering blood sugar and lipid levels, protecting the liver, and acting as antioxidants and antitumor agents. Catalyzes the transfer of a glucose moiety to the C-3 hydroxyl of mogrol to form mogroside I-E. Besides mogrol, UGT74AC1 also shows activity in vitro with quercetin and naringenin as substrate. The polypeptide is Mogroside I-E synthase (Siraitia grosvenorii (Monk's fruit)).